A 119-amino-acid chain; its full sequence is Small ribosomal subunit protein bS16 (119 aa).

The protein belongs to the bacterial ribosomal protein bS16 family.

This chain is Small ribosomal subunit protein bS16, found in Chlamydia caviae (strain ATCC VR-813 / DSM 19441 / 03DC25 / GPIC) (Chlamydophila caviae).